Reading from the N-terminus, the 293-residue chain is MKVAVYGKGGIGKSTTSCNISIALARRGRKVLQIGCDPKHDSTFTLTGFLIPTIIDTLQVKDYHYEDVWPEDVIYRGYGGVDCVEAGGPPAGAGCGGYVVGETVKLLKELNAFYEYDIILFDVLGDVVCGGFAAPLNYADYCIIITDNGFDALFAANRIAASVREKSHTHPLRLAGLVGNRTSGRDLIDKYVEACPMPVLEVLPLVEDIRVSRVKGKTLFEMAEYQPNLNYVCDFYLNIADQILSEPEGVVPREIPDRELFSLLSDFYLNSTFTNESDGGYDHQDVPLDFTII.

ATP contacts are provided by residues 10–15 (GIGKST) and Lys-39. Position 14 (Ser-14) interacts with Mg(2+). Cys-95 and Cys-129 together coordinate [4Fe-4S] cluster. Residue 180-181 (NR) participates in ATP binding.

Belongs to the NifH/BchL/ChlL family. Homodimer. Protochlorophyllide reductase is composed of three subunits; ChlL, ChlN and ChlB. It depends on [4Fe-4S] cluster as a cofactor.

The protein localises to the plastid. The protein resides in the chloroplast. It carries out the reaction chlorophyllide a + oxidized 2[4Fe-4S]-[ferredoxin] + 2 ADP + 2 phosphate = protochlorophyllide a + reduced 2[4Fe-4S]-[ferredoxin] + 2 ATP + 2 H2O. It functions in the pathway porphyrin-containing compound metabolism; chlorophyll biosynthesis (light-independent). Its function is as follows. Component of the dark-operative protochlorophyllide reductase (DPOR) that uses Mg-ATP and reduced ferredoxin to reduce ring D of protochlorophyllide (Pchlide) to form chlorophyllide a (Chlide). This reaction is light-independent. The L component serves as a unique electron donor to the NB-component of the complex, and binds Mg-ATP. The protein is Light-independent protochlorophyllide reductase iron-sulfur ATP-binding protein of Adiantum capillus-veneris (Maidenhair fern).